We begin with the raw amino-acid sequence, 150 residues long: FCS-Like Zinc finger 15 (150 aa).

Over residues 12 to 28 (NNNNNNNNNNNNNNNKN) the composition is skewed to low complexity. Residues 12–31 (NNNNNNNNNNNNNNNKNPLS) form a disordered region. The segment at 67–111 (GFLEHCFLCRRKLLPAKDIYMYKGDRAFCSVECRSKQMIMDEEES) adopts an FLZ-type zinc-finger fold. Positions 129-150 (SPATAPSRYRRDPRNQAGGFAY) are disordered.

Belongs to the FLZ family. Interacts with KIN10 and KIN11 via its FLZ-type zinc finger domain. Interacts with KINB1 and KINB3 via its N-terminal part. Forms homodimer and heterodimer with FLZ1, FLZ2 and FLZ7 in vitro.

The protein resides in the cytoplasm. It localises to the P-body. May act as an adapter to facilitate the interaction of SnRK1 complex with effector proteins, conferring tissue- and stimulus-type specific differences in the SnRK1 regulation pathway. The protein is FCS-Like Zinc finger 15 of Arabidopsis thaliana (Mouse-ear cress).